A 406-amino-acid chain; its full sequence is COP9 signalosome complex subunit 4 (406 aa).

One can recognise a PCI domain in the interval 197–366 (YRRKFIEAAQ…GIVHFETREP (170 aa)).

The protein belongs to the CSN4 family. As to quaternary structure, component of the CSN complex, probably composed of cops1, cops2, cops3, cops4, cops5, cops6, cops7, cops8 and cops9.

The protein resides in the cytoplasm. The protein localises to the nucleus. It localises to the cytoplasmic vesicle. Its subcellular location is the secretory vesicle. It is found in the synaptic vesicle. In terms of biological role, component of the COP9 signalosome complex (CSN), a complex involved in various cellular and developmental processes. The CSN complex is an essential regulator of the ubiquitin (Ubl) conjugation pathway by mediating the deneddylation of the cullin subunits of E3 ligase complexes, leading to modify the Ubl ligase activity. This chain is COP9 signalosome complex subunit 4 (cops4), found in Danio rerio (Zebrafish).